The sequence spans 152 residues: MDLVLSSQTDLTNYVKKVSIEDFGCQFLHTAHWNNRLRTTGGRFFPNDRHLDFNPKIYREFGIDIFRKIVRHELCHYHLYIQGKGYQHRDKAFKELLEKVDGLRYTPRVTAVKVNYHHYSCQSCGQVYRRRRRVNLRKFACGYCHGRLIESF.

In terms of domain architecture, SprT-like spans 13-148 (NYVKKVSIED…FACGYCHGRL (136 aa)). His72 contributes to the Zn(2+) binding site. The active site involves Glu73. His76 lines the Zn(2+) pocket.

The protein belongs to the SprT family. The cofactor is Zn(2+).

The protein localises to the cytoplasm. This chain is Protein SprT-like, found in Streptococcus agalactiae serotype III (strain NEM316).